A 498-amino-acid chain; its full sequence is Ribulose bisphosphate carboxylase large chain (498 aa).

A propeptide spanning residues 1–2 (MS) is cleaved from the precursor. Proline 3 carries the post-translational modification N-acetylproline. The residue at position 14 (lysine 14) is an N6,N6,N6-trimethyllysine. Substrate-binding residues include asparagine 123 and threonine 173. Catalysis depends on lysine 175, which acts as the Proton acceptor. A substrate-binding site is contributed by lysine 177. Residues lysine 201, aspartate 203, and glutamate 204 each coordinate Mg(2+). Lysine 201 is subject to N6-carboxylysine. Histidine 294 acts as the Proton acceptor in catalysis. Substrate-binding residues include arginine 295, histidine 327, and serine 379. Positions 471 to 498 (PVDTLDPNDKKQRDNEDTLADKLFGDKG) are disordered.

This sequence belongs to the RuBisCO large chain family. Type I subfamily. In terms of assembly, heterohexadecamer of 8 large chains and 8 small chains; disulfide-linked. The disulfide link is formed within the large subunit homodimers. Mg(2+) serves as cofactor. Post-translationally, the disulfide bond which can form in the large chain dimeric partners within the hexadecamer appears to be associated with oxidative stress and protein turnover.

Its subcellular location is the plastid. It catalyses the reaction 2 (2R)-3-phosphoglycerate + 2 H(+) = D-ribulose 1,5-bisphosphate + CO2 + H2O. The catalysed reaction is D-ribulose 1,5-bisphosphate + O2 = 2-phosphoglycolate + (2R)-3-phosphoglycerate + 2 H(+). Its function is as follows. RuBisCO catalyzes two reactions: the carboxylation of D-ribulose 1,5-bisphosphate, the primary event in carbon dioxide fixation, as well as the oxidative fragmentation of the pentose substrate in the photorespiration process. Both reactions occur simultaneously and in competition at the same active site. This chain is Ribulose bisphosphate carboxylase large chain (rbcL), found in Cuscuta reflexa (Southern Asian dodder).